The primary structure comprises 122 residues: uncharacterized protein (122 aa).

This is an uncharacterized protein from Schizosaccharomyces pombe (strain 972 / ATCC 24843) (Fission yeast).